The sequence spans 230 residues: Heptaprenylglyceryl phosphate synthase (230 aa).

K12 is a binding site for sn-glycerol 1-phosphate. 2 residues coordinate Mg(2+): D14 and T40. Residues 159 to 164 (YIEYSG), G189, and 209 to 210 (GD) contribute to the sn-glycerol 1-phosphate site.

This sequence belongs to the GGGP/HepGP synthase family. Group I subfamily. As to quaternary structure, homodimer. Mg(2+) serves as cofactor.

It carries out the reaction sn-glycerol 1-phosphate + all-trans-heptaprenyl diphosphate = 3-heptaprenyl-sn-glycero-1-phosphate + diphosphate. The protein operates within membrane lipid metabolism; glycerophospholipid metabolism. Prenyltransferase that catalyzes in vivo the transfer of the heptaprenyl moiety of heptaprenyl pyrophosphate (HepPP; 35 carbon atoms) to the C3 hydroxyl of sn-glycerol-1-phosphate (G1P), producing heptaprenylglyceryl phosphate (HepGP). This reaction is an ether-bond-formation step in the biosynthesis of archaea-type G1P-based membrane lipids found in Bacillales. The sequence is that of Heptaprenylglyceryl phosphate synthase from Staphylococcus aureus (strain bovine RF122 / ET3-1).